The primary structure comprises 320 residues: uncharacterized protein (320 aa).

The protein belongs to the NAD(P)-dependent epimerase/dehydratase family.

This is an uncharacterized protein from Staphylococcus saprophyticus subsp. saprophyticus (strain ATCC 15305 / DSM 20229 / NCIMB 8711 / NCTC 7292 / S-41).